A 2939-amino-acid polypeptide reads, in one-letter code: Serine/threonine-protein kinase tel1 (2939 aa).

3 disordered regions span residues Gly193–Ser212, Pro695–Ser718, and Lys859–Lys886. Basic and acidic residues predominate over residues Glu697–Ala715. The FAT domain occupies Ile1869 to Ala2471. The PI3K/PI4K catalytic domain occupies Phe2577–Glu2890. The interval Ile2583–Ala2589 is G-loop. The segment at Gly2755 to Asn2763 is catalytic loop. Positions His2775–Thr2799 are activation loop. Residues Asp2869 to Ala2894 are disordered. Over residues Asp2875 to Ser2884 the composition is skewed to basic and acidic residues. The FATC domain occupies Lys2907–Ala2939.

It belongs to the PI3/PI4-kinase family. ATM subfamily. Associates with DNA double-strand breaks.

The protein resides in the nucleus. Its subcellular location is the chromosome. The protein localises to the telomere. The catalysed reaction is L-seryl-[protein] + ATP = O-phospho-L-seryl-[protein] + ADP + H(+). It carries out the reaction L-threonyl-[protein] + ATP = O-phospho-L-threonyl-[protein] + ADP + H(+). Serine/threonine protein kinase which activates checkpoint signaling upon genotoxic stresses such as ionizing radiation (IR), ultraviolet light (UV), or DNA replication stalling, thereby acting as a DNA damage sensor. Recognizes the substrate consensus sequence [ST]-Q. Phosphorylates histone H2A to form H2AS128ph (gamma-H2A) at sites of DNA damage, involved in the regulation of DNA damage response mechanism. Required for the control of telomere length and genome stability. This is Serine/threonine-protein kinase tel1 (mus-21) from Neurospora crassa (strain ATCC 24698 / 74-OR23-1A / CBS 708.71 / DSM 1257 / FGSC 987).